The sequence spans 254 residues: Thiazole synthase (254 aa).

The active-site Schiff-base intermediate with DXP is K95. 1-deoxy-D-xylulose 5-phosphate-binding positions include G156, 182 to 183, and 204 to 205; these read AG and NT.

Belongs to the ThiG family. Homotetramer. Forms heterodimers with either ThiH or ThiS.

It localises to the cytoplasm. It catalyses the reaction [ThiS sulfur-carrier protein]-C-terminal-Gly-aminoethanethioate + 2-iminoacetate + 1-deoxy-D-xylulose 5-phosphate = [ThiS sulfur-carrier protein]-C-terminal Gly-Gly + 2-[(2R,5Z)-2-carboxy-4-methylthiazol-5(2H)-ylidene]ethyl phosphate + 2 H2O + H(+). It functions in the pathway cofactor biosynthesis; thiamine diphosphate biosynthesis. Catalyzes the rearrangement of 1-deoxy-D-xylulose 5-phosphate (DXP) to produce the thiazole phosphate moiety of thiamine. Sulfur is provided by the thiocarboxylate moiety of the carrier protein ThiS. In vitro, sulfur can be provided by H(2)S. This Shewanella sp. (strain W3-18-1) protein is Thiazole synthase.